The chain runs to 589 residues: DNA mismatch repair protein MutL (589 aa).

2 disordered regions span residues 330–355 and 374–394; these read LQRREAPQRPEPARPYTTPPPSSHRE and RIYEQPEPYRPPEPPAASEPT. Over residues 331–341 the composition is skewed to basic and acidic residues; sequence QRREAPQRPEP. The segment covering 381-390 has biased composition (pro residues); it reads PYRPPEPPAA.

Belongs to the DNA mismatch repair MutL/HexB family.

This protein is involved in the repair of mismatches in DNA. It is required for dam-dependent methyl-directed DNA mismatch repair. May act as a 'molecular matchmaker', a protein that promotes the formation of a stable complex between two or more DNA-binding proteins in an ATP-dependent manner without itself being part of a final effector complex. This is DNA mismatch repair protein MutL from Trichlorobacter lovleyi (strain ATCC BAA-1151 / DSM 17278 / SZ) (Geobacter lovleyi).